The sequence spans 530 residues: T-complex protein 1 subunit zeta-2 (530 aa).

This sequence belongs to the TCP-1 chaperonin family. As to quaternary structure, component of the chaperonin-containing T-complex (TRiC), a heterooligomeric complex of about 850 to 900 kDa that forms two stacked rings, 12 to 16 nm in diameter. In terms of tissue distribution, testis-specific.

It localises to the cytoplasm. Its function is as follows. Component of the chaperonin-containing T-complex (TRiC), a molecular chaperone complex that assists the folding of proteins upon ATP hydrolysis. In Homo sapiens (Human), this protein is T-complex protein 1 subunit zeta-2 (CCT6B).